The sequence spans 179 residues: Large ribosomal subunit protein uL5 (179 aa).

Belongs to the universal ribosomal protein uL5 family. In terms of assembly, part of the 50S ribosomal subunit; part of the 5S rRNA/L5/L18/L25 subcomplex. Contacts the 5S rRNA and the P site tRNA. Forms a bridge to the 30S subunit in the 70S ribosome.

Its function is as follows. This is one of the proteins that bind and probably mediate the attachment of the 5S RNA into the large ribosomal subunit, where it forms part of the central protuberance. In the 70S ribosome it contacts protein S13 of the 30S subunit (bridge B1b), connecting the 2 subunits; this bridge is implicated in subunit movement. Contacts the P site tRNA; the 5S rRNA and some of its associated proteins might help stabilize positioning of ribosome-bound tRNAs. The polypeptide is Large ribosomal subunit protein uL5 (Buchnera aphidicola subsp. Schizaphis graminum (strain Sg)).